The sequence spans 238 residues: Probable transcriptional regulatory protein SUB0364 (238 aa).

Belongs to the TACO1 family. YeeN subfamily.

It is found in the cytoplasm. This chain is Probable transcriptional regulatory protein SUB0364, found in Streptococcus uberis (strain ATCC BAA-854 / 0140J).